Reading from the N-terminus, the 327-residue chain is Cell division protein ZipA (327 aa).

At 1–5 (MQDLR) the chain is on the periplasmic side. A helical transmembrane segment spans residues 6-26 (LILIVVGAIAIIALLLHGLWT). Topologically, residues 27-327 (SRKERSSLFR…REVLDANTIA (301 aa)) are cytoplasmic. The span at 60-71 (GEVRVRTSHPQE) shows a compositional bias: basic and acidic residues. A disordered region spans residues 60–182 (GEVRVRTSHP…EPVAPAPEAK (123 aa)). 2 stretches are compositionally biased toward polar residues: residues 94–103 (KSAQVKTASR) and 163–173 (APQQHVESQQE).

It belongs to the ZipA family. Interacts with FtsZ via their C-terminal domains.

It is found in the cell inner membrane. Essential cell division protein that stabilizes the FtsZ protofilaments by cross-linking them and that serves as a cytoplasmic membrane anchor for the Z ring. Also required for the recruitment to the septal ring of downstream cell division proteins. The chain is Cell division protein ZipA from Yersinia pseudotuberculosis serotype O:1b (strain IP 31758).